A 382-amino-acid polypeptide reads, in one-letter code: MTEHAIKYRLIKKEKHTGARLGEIITPHGTFPTPMFMPVGTQATVKTMSPEELKTLGSGIILSNTYHLWLRPGDELVAEAGGLHKFMNWDQPILTDSGGFQVYSLVQNKKNITEEGVKFKSHLDGRELFLNPEKAISIQNNLGSDIMMSFDECPPFYQPYDYVKASVERTSRWAERGLNAHRRPNDQGLFGIVQGAGFEDLRRQSASDLTSMDFAGYSIGGLAVGESHKEMNAVLDFTTPMLPEDKPRYLMGVGAPDSLIDGVIRGVDMFDCVLPTRIARNGTLMTHFGRVNIRNAKYEHDFTPLDPMCDCYTCTNYTRAYLRHLIKADETFGLRLCSYHNLHFLVNLMKDVRQAIMDDNLLEFREDFCERYGYNQPNAKDF.

Asp96 functions as the Proton acceptor in the catalytic mechanism. Substrate contacts are provided by residues Asp96 to Phe100, Asp151, Gln194, and Gly221. An RNA binding region spans residues Gly252–Ser258. The active-site Nucleophile is the Asp271. An RNA binding; important for wobble base 34 recognition region spans residues Thr276 to Arg280. The Zn(2+) site is built by Cys309, Cys311, Cys314, and His340.

It belongs to the queuine tRNA-ribosyltransferase family. As to quaternary structure, homodimer. Within each dimer, one monomer is responsible for RNA recognition and catalysis, while the other monomer binds to the replacement base PreQ1. Requires Zn(2+) as cofactor.

It carries out the reaction 7-aminomethyl-7-carbaguanine + guanosine(34) in tRNA = 7-aminomethyl-7-carbaguanosine(34) in tRNA + guanine. The protein operates within tRNA modification; tRNA-queuosine biosynthesis. Catalyzes the base-exchange of a guanine (G) residue with the queuine precursor 7-aminomethyl-7-deazaguanine (PreQ1) at position 34 (anticodon wobble position) in tRNAs with GU(N) anticodons (tRNA-Asp, -Asn, -His and -Tyr). Catalysis occurs through a double-displacement mechanism. The nucleophile active site attacks the C1' of nucleotide 34 to detach the guanine base from the RNA, forming a covalent enzyme-RNA intermediate. The proton acceptor active site deprotonates the incoming PreQ1, allowing a nucleophilic attack on the C1' of the ribose to form the product. After dissociation, two additional enzymatic reactions on the tRNA convert PreQ1 to queuine (Q), resulting in the hypermodified nucleoside queuosine (7-(((4,5-cis-dihydroxy-2-cyclopenten-1-yl)amino)methyl)-7-deazaguanosine). This is Queuine tRNA-ribosyltransferase from Lactococcus lactis subsp. cremoris (strain SK11).